The primary structure comprises 251 residues: Imidazole glycerol phosphate synthase subunit HisF (251 aa).

Active-site residues include aspartate 11 and aspartate 130.

The protein belongs to the HisA/HisF family. In terms of assembly, heterodimer of HisH and HisF.

It is found in the cytoplasm. The catalysed reaction is 5-[(5-phospho-1-deoxy-D-ribulos-1-ylimino)methylamino]-1-(5-phospho-beta-D-ribosyl)imidazole-4-carboxamide + L-glutamine = D-erythro-1-(imidazol-4-yl)glycerol 3-phosphate + 5-amino-1-(5-phospho-beta-D-ribosyl)imidazole-4-carboxamide + L-glutamate + H(+). Its pathway is amino-acid biosynthesis; L-histidine biosynthesis; L-histidine from 5-phospho-alpha-D-ribose 1-diphosphate: step 5/9. Functionally, IGPS catalyzes the conversion of PRFAR and glutamine to IGP, AICAR and glutamate. The HisF subunit catalyzes the cyclization activity that produces IGP and AICAR from PRFAR using the ammonia provided by the HisH subunit. In Chlorobaculum tepidum (strain ATCC 49652 / DSM 12025 / NBRC 103806 / TLS) (Chlorobium tepidum), this protein is Imidazole glycerol phosphate synthase subunit HisF.